The primary structure comprises 859 residues: Bifunctional levopimaradiene synthase, chloroplastic (859 aa).

Residues 1-70 (MALLSSSLSS…IACVGEDSLS (70 aa)) constitute a chloroplast transit peptide. K259 lines the substrate pocket. Residues D392 and D394 each contribute to the Mg(2+) site. The DXDD motif signature appears at 392–395 (DIDD). K479 serves as a coordination point for substrate. D611, D615, N755, T759, and E763 together coordinate Mg(2+). A DDXXD motif motif is present at residues 611–615 (DDLYD).

It belongs to the terpene synthase family. Tpsd subfamily. Mg(2+) is required as a cofactor.

Its subcellular location is the plastid. It localises to the chloroplast. The enzyme catalyses (2E,6E,10E)-geranylgeranyl diphosphate = (+)-copalyl diphosphate. The catalysed reaction is (+)-copalyl diphosphate = abieta-8(14),12-diene + diphosphate. It participates in terpene metabolism; oleoresin biosynthesis. In terms of biological role, involved in defensive oleoresin formation in conifers in response to insect attack or other injury. Involved in diterpene (C20) olefins biosynthesis. Bifunctional enzyme that catalyzes two sequential cyclizations of geranylgeranyl diphosphate (GGPP) to levopimaradiene. Levopimaradiene is the major products of the enzyme followed by abietadiene, neoabietadiene and palustradiene. In Picea abies (Norway spruce), this protein is Bifunctional levopimaradiene synthase, chloroplastic (TPS-LAS).